Reading from the N-terminus, the 150-residue chain is UPF0735 ACT domain-containing protein Helmi_18680 (150 aa).

One can recognise an ACT domain in the interval 72 to 147 (SVSLLLEHHP…GVRSAQLVGS (76 aa)).

It belongs to the UPF0735 family.

This is UPF0735 ACT domain-containing protein Helmi_18680 from Heliobacterium modesticaldum (strain ATCC 51547 / Ice1).